The chain runs to 977 residues: Disks large-associated protein 3 (977 aa).

A compositionally biased stretch (basic and acidic residues) spans 1–10 (MRGYHGDRGS). Disordered stretches follow at residues 1 to 30 (MRGY…PAAR), 52 to 90 (AGLG…SSTF), 137 to 167 (FHTL…ESPS), 181 to 289 (AKSH…CLDA), 398 to 417 (AMGD…SPKA), and 529 to 582 (PGSS…SADG). Over residues 53 to 73 (GLGHLSPEGPLSLSEGPSSVG) the composition is skewed to low complexity. A Phosphoserine modification is found at S58. Residues 74–85 (PEGGPGGVGAGG) are compositionally biased toward gly residues. The segment covering 189–201 (PGKRDYNGPKAEG) has biased composition (basic and acidic residues). A compositionally biased stretch (low complexity) spans 202 to 212 (RSSSGGDSYSG). Positions 221–245 (SHHHHHHHHHHHHQSRHGKRSKSKD) are enriched in basic residues. The span at 258-271 (GWWSSDDNLDSDSG) shows a compositional bias: low complexity. Phosphoserine occurs at positions 404, 407, 410, and 414. A compositionally biased stretch (pro residues) spans 538 to 547 (APPPIPPGSQ). Phosphoserine is present on residues S641 and S643. Disordered regions lie at residues 739–788 (EGYP…RTSP) and 906–939 (EEKK…RQRQ). Over residues 754-763 (PGPPPVPAPG) the composition is skewed to pro residues. Basic and acidic residues-rich tracts occupy residues 767-777 (GRRDSWMERGS) and 925-939 (PVKE…RQRQ). Phosphoserine occurs at positions 930, 933, and 965.

Belongs to the SAPAP family. As to quaternary structure, interacts with DLG1 and DLG4/PSD-95. Expressed in most brain regions.

It localises to the cell membrane. Its subcellular location is the postsynaptic density. The protein resides in the synapse. Functionally, may play a role in the molecular organization of synapses and neuronal cell signaling. Could be an adapter protein linking ion channel to the subsynaptic cytoskeleton. May induce enrichment of PSD-95/SAP90 at the plasma membrane. The chain is Disks large-associated protein 3 (Dlgap3) from Rattus norvegicus (Rat).